Here is a 184-residue protein sequence, read N- to C-terminus: Flavin prenyltransferase UbiX (184 aa).

FMN contacts are provided by residues 9–11, S34, 85–88, and R120; these read GAS and SMKT. Residues Y150 and R166 each coordinate dimethylallyl phosphate.

It belongs to the UbiX/PAD1 family.

It catalyses the reaction dimethylallyl phosphate + FMNH2 = prenylated FMNH2 + phosphate. In terms of biological role, flavin prenyltransferase that catalyzes the synthesis of the prenylated FMN cofactor (prenyl-FMN) for 4-hydroxy-3-polyprenylbenzoic acid decarboxylase UbiD. The prenyltransferase is metal-independent and links a dimethylallyl moiety from dimethylallyl monophosphate (DMAP) to the flavin N5 and C6 atoms of FMN. In Methanocaldococcus jannaschii (strain ATCC 43067 / DSM 2661 / JAL-1 / JCM 10045 / NBRC 100440) (Methanococcus jannaschii), this protein is Flavin prenyltransferase UbiX.